The following is a 701-amino-acid chain: CRS2-associated factor 1, chloroplastic (701 aa).

A chloroplast-targeting transit peptide spans 1–37 (MSLKLNTPFPIFAPSLFPNHNPRAPSEIRFSRWGNAN). Disordered stretches follow at residues 68 to 136 (VHTH…PEVK) and 191 to 221 (LPQS…QKPG). CRM domains follow at residues 241–337 (EPLT…TRPR) and 359–455 (EGLT…LTTP). Residues 471 to 532 (LPEDDEPSVS…SLQSWSTKDV (62 aa)) form a disordered region. 2 stretches are compositionally biased toward polar residues: residues 479–492 (VSPN…QNPP) and 520–530 (TINSLQSWSTK). The segment at 564 to 586 (RVLILMKQAVESGTALVLDAADL) is CRS2 binding.

Interacts with CRS2 and RNA. Part of large ribonucleo-protein complexes that include group IIB introns, CRS2 and CAF1.

Its subcellular location is the plastid. It localises to the chloroplast stroma. Its function is as follows. Required for the splicing of group IIB introns in chloroplasts. Forms splicing particles with CRS2. Interacts with RNA and confers intron specificity of the splicing particles. The sequence is that of CRS2-associated factor 1, chloroplastic from Arabidopsis thaliana (Mouse-ear cress).